Reading from the N-terminus, the 134-residue chain is Small ribosomal subunit protein uS12 (134 aa).

Residues 1–27 (MPTIQQLVRKGRESFADKSKSPALNSC) are disordered. Residues 10–20 (KGRESFADKSK) are compositionally biased toward basic and acidic residues. The residue at position 89 (D89) is a 3-methylthioaspartic acid. Residues 103 to 134 (DTAGVNGRTQRRSKYGAKRPKPGQAPAAKGKK) are disordered. The span at 111–123 (TQRRSKYGAKRPK) shows a compositional bias: basic residues. The segment covering 124 to 134 (PGQAPAAKGKK) has biased composition (low complexity).

Belongs to the universal ribosomal protein uS12 family. Part of the 30S ribosomal subunit. Contacts proteins S8 and S17. May interact with IF1 in the 30S initiation complex.

Functionally, with S4 and S5 plays an important role in translational accuracy. Interacts with and stabilizes bases of the 16S rRNA that are involved in tRNA selection in the A site and with the mRNA backbone. Located at the interface of the 30S and 50S subunits, it traverses the body of the 30S subunit contacting proteins on the other side and probably holding the rRNA structure together. The combined cluster of proteins S8, S12 and S17 appears to hold together the shoulder and platform of the 30S subunit. The chain is Small ribosomal subunit protein uS12 from Porphyromonas gingivalis (strain ATCC 33277 / DSM 20709 / CIP 103683 / JCM 12257 / NCTC 11834 / 2561).